Reading from the N-terminus, the 289-residue chain is Release factor glutamine methyltransferase (289 aa).

S-adenosyl-L-methionine is bound by residues 122 to 126 (GVGSG), Asp-145, Trp-174, and Asn-189. Substrate is bound at residue 189–192 (NPPY).

Belongs to the protein N5-glutamine methyltransferase family. PrmC subfamily.

The catalysed reaction is L-glutaminyl-[peptide chain release factor] + S-adenosyl-L-methionine = N(5)-methyl-L-glutaminyl-[peptide chain release factor] + S-adenosyl-L-homocysteine + H(+). Methylates the class 1 translation termination release factors RF1/PrfA and RF2/PrfB on the glutamine residue of the universally conserved GGQ motif. The sequence is that of Release factor glutamine methyltransferase from Caulobacter vibrioides (strain ATCC 19089 / CIP 103742 / CB 15) (Caulobacter crescentus).